A 150-amino-acid polypeptide reads, in one-letter code: MTLRLESLKPNKGARRRKLRKGRGIAAGQGASCGFGMRGQKSRSGRPTRPGFEGGQMPLYRRVPKLKHFTLVNPKSFTVLNVSALNEIKAGSTVNLDSLVKDGIVTSPKSPLKILGNGELKAKLTVQAAAFTASARAKIEAAGGTCEVLD.

The interval 1–57 (MTLRLESLKPNKGARRRKLRKGRGIAAGQGASCGFGMRGQKSRSGRPTRPGFEGGQM) is disordered. Positions 12–23 (KGARRRKLRKGR) are enriched in basic residues. The span at 25–37 (IAAGQGASCGFGM) shows a compositional bias: gly residues.

The protein belongs to the universal ribosomal protein uL15 family. As to quaternary structure, part of the 50S ribosomal subunit.

In terms of biological role, binds to the 23S rRNA. The chain is Large ribosomal subunit protein uL15 from Synechococcus sp. (strain CC9311).